Here is a 286-residue protein sequence, read N- to C-terminus: Deleted in azoospermia-like-B (286 aa).

The region spanning 33–114 (NTVFVGGIDI…PAIRKICTYV (82 aa)) is the RRM domain. The DAZ domain maps to 155-180 (ACPYPSSPPMAIQQIPVGCQQPGYFQ).

Belongs to the RRM DAZ family. Interacts with the C-terminus of pabp1 and with epabp. Prior to oocyte maturation, found in a complex with epabp and pum2 proteins and spdy1 mRNA; pum2 dissociates from the complex during maturation.

The protein resides in the cytoplasm. Functionally, RNA-binding protein that is required for primordial germ cell (PGC) differentiation and indirectly necessary for the migration of PGCs through the endoderm. May promote meiotic cell division during spermatogenesis. Shows a preference for G- and U-rich RNAs and probably binds the 3'-UTR of target mRNAs. Stimulates the initiation of translation of mRNAs through the recruitment of poly(A)-binding proteins (PABPs). The sequence is that of Deleted in azoospermia-like-B (dazl-b) from Xenopus laevis (African clawed frog).